The sequence spans 441 residues: MELKNCPLINEIKRQIGSHTHILVGFSGGVDSTVLLHGLVCLRDKYQLPLELTAIYVHHGLNSKADDWLTHCEHFCHNWQVSFISERVQVNGKEGGIEQGAREARYQAYRQYLQPNQVLVTAQHQDDQAETFLLALKRGSGPAGLSSMPAKMPFEQGYLLRPLLNITREQIEAYAHEHGLLWIEDDSNQDDRYDRNFLRLHVMPLLTQRWPHFSQAVTRSAALCGEQEALLDELLDVELQQLIDEHQSLDINLLSRCSEIKRNALLRRWFAKCNKSMPSRSQLSRLWQEVALAKADAEPRLRFFQDEVRRYQQRLYLVPVMEELTDRVIEWSLSQPLILPNQLGILAVSRDSGKTICRAPLADEKVTVRFGLTASSLRIVGRDLARSSKKIWQELNIAPWQRTRIPLIYYNDTLIAAVNTFVTLEGNATTEQSITIEWQAS.

Residue 27-32 (SGGVDS) participates in ATP binding.

This sequence belongs to the tRNA(Ile)-lysidine synthase family.

Its subcellular location is the cytoplasm. The enzyme catalyses cytidine(34) in tRNA(Ile2) + L-lysine + ATP = lysidine(34) in tRNA(Ile2) + AMP + diphosphate + H(+). Ligates lysine onto the cytidine present at position 34 of the AUA codon-specific tRNA(Ile) that contains the anticodon CAU, in an ATP-dependent manner. Cytidine is converted to lysidine, thus changing the amino acid specificity of the tRNA from methionine to isoleucine. This chain is tRNA(Ile)-lysidine synthase, found in Proteus mirabilis (strain HI4320).